We begin with the raw amino-acid sequence, 555 residues long: Transcription factor kojR (555 aa).

A DNA-binding region (zn(2)-C6 fungal-type) is located at residues 21–47; that stretch reads CETCKLRKRKCDGHEPCTYCLRYEYQC. The segment at 51-73 is disordered; it reads PHPRRKPAASKSSARPSEEEDSP.

The protein resides in the nucleus. Functionally, transcription factor that regulates the gene cluster that mediates the biosynthesis of 5-hydroxy-2-hydroxymethyl-1,4-pyrone, also know as kojic acid, a by-product in the fermentation process of malting rice that acts as a chelation agent. Mediates the expression of kojA and kojT via binding of an 11-nucleotide palindromic sequence, 5'-CGRCTWAGYCG-3' (R=A/G, W=A/T, Y=C/T) within the target gene promoters. In Aspergillus flavus (strain ATCC 200026 / FGSC A1120 / IAM 13836 / NRRL 3357 / JCM 12722 / SRRC 167), this protein is Transcription factor kojR.